Reading from the N-terminus, the 578-residue chain is Trehalase (578 aa).

A signal peptide spans 1–19 (MPGSTWELHLLLLLGLGLG). Asn78 carries N-linked (GlcNAc...) asparagine glycosylation. Substrate contacts are provided by residues Arg168, 175–176 (WD), Asn212, and 221–223 (RSQ). Residue Asn261 is glycosylated (N-linked (GlcNAc...) asparagine). Residues 286–288 (RPE) and Gly319 contribute to the substrate site. Asp321 functions as the Proton donor/acceptor in the catalytic mechanism. N-linked (GlcNAc...) asparagine glycosylation is present at Asn369. Glu514 serves as the catalytic Proton donor/acceptor. Residue Glu528 coordinates substrate. The GPI-anchor amidated serine moiety is linked to residue Ser555. The propeptide at 556 to 578 (GTQLALLEPHCLAAALLLSFLTR) is removed in mature form.

Belongs to the glycosyl hydrolase 37 family. In terms of assembly, homodimer; disulfide-linked. As to expression, expressed in small intestine, kidney, and to a lesser extent in liver.

It is found in the cell membrane. It catalyses the reaction alpha,alpha-trehalose + H2O = alpha-D-glucose + beta-D-glucose. Functionally, intestinal trehalase is probably involved in the hydrolysis of ingested trehalose. In Oryctolagus cuniculus (Rabbit), this protein is Trehalase (TREH).